Reading from the N-terminus, the 337-residue chain is Quinolinate synthase (337 aa).

Iminosuccinate contacts are provided by His-38 and Ser-59. Position 104 (Cys-104) interacts with [4Fe-4S] cluster. Iminosuccinate contacts are provided by residues 130-132 (YAN) and Ser-147. Cys-191 contacts [4Fe-4S] cluster. Iminosuccinate contacts are provided by residues 217–219 (HPE) and Thr-234. Cys-288 is a [4Fe-4S] cluster binding site.

This sequence belongs to the quinolinate synthase family. Type 1 subfamily. Requires [4Fe-4S] cluster as cofactor.

The protein localises to the cytoplasm. It carries out the reaction iminosuccinate + dihydroxyacetone phosphate = quinolinate + phosphate + 2 H2O + H(+). It participates in cofactor biosynthesis; NAD(+) biosynthesis; quinolinate from iminoaspartate: step 1/1. In terms of biological role, catalyzes the condensation of iminoaspartate with dihydroxyacetone phosphate to form quinolinate. This Wigglesworthia glossinidia brevipalpis protein is Quinolinate synthase.